Consider the following 160-residue polypeptide: Nucleotide-binding protein BP2916 (160 aa).

It belongs to the YajQ family.

Functionally, nucleotide-binding protein. The chain is Nucleotide-binding protein BP2916 from Bordetella pertussis (strain Tohama I / ATCC BAA-589 / NCTC 13251).